Here is a 347-residue protein sequence, read N- to C-terminus: Merozoite surface protein P12 (347 aa).

The segment at residues 1-23 (MIKLSKKYCLGISFVLYILLSVC) is a signal peptide (or 25). 6-Cys domains lie at 27–172 (KNLT…IPSL) and 175–305 (KVKG…ISSS). Asparagine 28 carries an N-linked (GlcNAc...) asparagine glycan. 3 disulfides stabilise this stretch: cysteine 31–cysteine 53, cysteine 67–cysteine 138, and cysteine 81–cysteine 136. Asparagine 147, asparagine 200, asparagine 228, asparagine 242, asparagine 265, and asparagine 322 each carry an N-linked (GlcNAc...) asparagine glycan. 3 cysteine pairs are disulfide-bonded: cysteine 179/cysteine 211, cysteine 225/cysteine 286, and cysteine 236/cysteine 284. Asparagine 322 carries the GPI-anchor amidated asparagine lipid modification. Positions 323–347 (SSFLTLSSYCAFITFIITSFLSFIL) are cleaved as a propeptide — removed in mature form.

Heterodimer; heterodimerizes with PF41. May form an antiparallel heterodimer with PF41.

Its subcellular location is the cell surface. The protein localises to the cell membrane. The chain is Merozoite surface protein P12 (PF12) from Plasmodium falciparum.